We begin with the raw amino-acid sequence, 273 residues long: Programmed cell death 1 ligand 2 (273 aa).

A signal peptide spans 1 to 19 (MIFLLLMLSLELQLHQIAA). The Extracellular portion of the chain corresponds to 20 to 220 (LFTVTVPKEL…SQMEPRTHPT (201 aa)). In terms of domain architecture, Ig-like V-type spans 21–118 (FTVTVPKELY…AWDYKYLTLK (98 aa)). N-linked (GlcNAc...) asparagine glycosylation is found at Asn37, Asn64, Asn157, Asn163, and Asn189. 2 cysteine pairs are disulfide-bonded: Cys42–Cys102 and Cys143–Cys192. Positions 122–203 (SYRKINTHIL…FWNTHVRELT (82 aa)) constitute an Ig-like C2-type domain. A helical transmembrane segment spans residues 221-241 (WLLHIFIPFCIIAFIFIATVI). Topologically, residues 242-273 (ALRKQLCQKLYSSKDTTKRPVTTTKREVNSAI) are cytoplasmic.

The protein belongs to the immunoglobulin superfamily. BTN/MOG family. Interacts with PDCD1. In terms of tissue distribution, highly expressed in heart, placenta, pancreas, lung and liver and weakly expressed in spleen, lymph nodes and thymus.

The protein localises to the secreted. It is found in the endomembrane system. Its subcellular location is the cell membrane. In terms of biological role, involved in the costimulatory signal, essential for T-cell proliferation and IFNG production in a PDCD1-independent manner. Interaction with PDCD1 inhibits T-cell proliferation by blocking cell cycle progression and cytokine production. The polypeptide is Programmed cell death 1 ligand 2 (PDCD1LG2) (Homo sapiens (Human)).